The chain runs to 370 residues: Serine/threonine-protein kinase SAPK5 (370 aa).

The 257-residue stretch at 4–260 (YEPVREIGAG…MGEIKSHPWF (257 aa)) folds into the Protein kinase domain. ATP is bound by residues 10–18 (IGAGNFGVA) and Lys33. Asp123 acts as the Proton acceptor in catalysis. The tract at residues 312 to 370 (EAQTVPKPDKPVSGYGWGTDDDDDDQQPAEEEDEEDDYDRTVREVHASVDLDMSNLQIS) is disordered. Positions 330–349 (TDDDDDDQQPAEEEDEEDDY) are enriched in acidic residues. A compositionally biased stretch (basic and acidic residues) spans 350–360 (DRTVREVHASV).

It belongs to the protein kinase superfamily. Ser/Thr protein kinase family. May be phosphorylated. In terms of tissue distribution, expressed in leaf blades, leaf sheaths and roots. Expressed in shoots and roots of young seedlings.

It is found in the cytoplasm. The protein localises to the nucleus. The enzyme catalyses L-seryl-[protein] + ATP = O-phospho-L-seryl-[protein] + ADP + H(+). It catalyses the reaction L-threonyl-[protein] + ATP = O-phospho-L-threonyl-[protein] + ADP + H(+). Activated by hyperosmotic stress. Its function is as follows. May play a role in signal transduction of hyperosmotic response. This chain is Serine/threonine-protein kinase SAPK5 (SAPK5), found in Oryza sativa subsp. japonica (Rice).